A 307-amino-acid chain; its full sequence is Protein pid-3 (307 aa).

In terms of assembly, component of the pid-1 variant of the PETISCO complex (also called the pid-3, erh-2, tofu-6, and ife-3 small RNA complex) containing at least pid-1, tofu-6, ife-3, pid-3, and erh-2, which is required for the biogenesis of a class of 21 nucleotide PIWI-interacting RNAs (piRNAs) that possess a uracil residue at the 5'-end (also called 21U-RNAs). Within the complex interacts with pid-1; the interaction is direct. Component of the tost-1 variant of the PETISCO complex (also called the pid-3, erh-2, tofu-6, and ife-3 small RNA complex) containing at least tost-1, tofu-6, ife-3, pid-3, and erh-2, which plays an essential role in embryogenesis. Within the complex interacts with tost-1. Within the pid-1 and tost-1 variants of the PETISCO complexes interacts with tofu-6 (via the RRM domain) and erh-2. In contrast to the pid-1 variant of the PETISCO complex, the tost-1 variant of the PETISCO complex plays a minor role in the biogenesis of 21U-RNAs. Expressed in the germline (at protein level).

Its subcellular location is the cytoplasm. The protein localises to the perinuclear region. It is found in the nucleus. Functionally, component of the pid-1 and tost-1 variants of the PETISCO complexes, which have roles in the biogenesis of a class of 21 nucleotide PIWI-interacting RNAs (piRNAs) that possess a uracil residue at the 5'-end (also called 21U-RNAs) and embryogenesis, respectively. Within the pid-1 variant of the PETISCO complex may stabilize 21U-RNA precursor molecules. Promotes the biogenesis of 21U-RNAs. Required for chromosome segregation and cell division in early embryos. The protein is Protein pid-3 of Caenorhabditis elegans.